The primary structure comprises 504 residues: Deoxyguanosinetriphosphate triphosphohydrolase (504 aa).

The 208-residue stretch at 66–273 (RLTHSLEVQQ…MEAADDISYC (208 aa)) folds into the HD domain.

It belongs to the dGTPase family. Type 1 subfamily. In terms of assembly, homotetramer. Mg(2+) is required as a cofactor.

It carries out the reaction dGTP + H2O = 2'-deoxyguanosine + triphosphate + H(+). Its function is as follows. dGTPase preferentially hydrolyzes dGTP over the other canonical NTPs. This chain is Deoxyguanosinetriphosphate triphosphohydrolase, found in Klebsiella pneumoniae subsp. pneumoniae (strain ATCC 700721 / MGH 78578).